The following is a 459-amino-acid chain: Cobyrinate a,c-diamide synthase (459 aa).

The GATase cobBQ-type domain maps to 249–446 (RIGMAFDEAF…VHTHFASRPG (198 aa)). Catalysis depends on Cys332, which acts as the Nucleophile.

Belongs to the CobB/CbiA family. It depends on Mg(2+) as a cofactor.

It catalyses the reaction cob(II)yrinate + 2 L-glutamine + 2 ATP + 2 H2O = cob(II)yrinate a,c diamide + 2 L-glutamate + 2 ADP + 2 phosphate + 2 H(+). Its pathway is cofactor biosynthesis; adenosylcobalamin biosynthesis; cob(II)yrinate a,c-diamide from sirohydrochlorin (anaerobic route): step 10/10. Its function is as follows. Catalyzes the ATP-dependent amidation of the two carboxylate groups at positions a and c of cobyrinate, using either L-glutamine or ammonia as the nitrogen source. This Syntrophotalea carbinolica (strain DSM 2380 / NBRC 103641 / GraBd1) (Pelobacter carbinolicus) protein is Cobyrinate a,c-diamide synthase.